The primary structure comprises 224 residues: Ribose-5-phosphate isomerase A (224 aa).

Residues 26-29 (TGST), 82-85 (DGAD), and 95-98 (KGGG) contribute to the substrate site. The active-site Proton acceptor is E104. K122 lines the substrate pocket.

The protein belongs to the ribose 5-phosphate isomerase family. Homodimer.

It catalyses the reaction aldehydo-D-ribose 5-phosphate = D-ribulose 5-phosphate. The protein operates within carbohydrate degradation; pentose phosphate pathway; D-ribose 5-phosphate from D-ribulose 5-phosphate (non-oxidative stage): step 1/1. In terms of biological role, catalyzes the reversible conversion of ribose-5-phosphate to ribulose 5-phosphate. The sequence is that of Ribose-5-phosphate isomerase A from Lactococcus lactis subsp. cremoris (strain SK11).